The primary structure comprises 118 residues: UPF0342 protein BCE_0953 (118 aa).

The protein belongs to the UPF0342 family.

This chain is UPF0342 protein BCE_0953, found in Bacillus cereus (strain ATCC 10987 / NRS 248).